We begin with the raw amino-acid sequence, 204 residues long: Holliday junction branch migration complex subunit RuvA (204 aa).

The tract at residues 1–67 is domain I; sequence MIAFLSGHLV…ETELVLYGFG (67 aa). The segment at 68-146 is domain II; that stretch reads SPAERDVFVE…HWRQGLENAD (79 aa). The segment at 147–156 is flexible linker; it reads RPLAGGPPPA. The interval 156 to 204 is domain III; the sequence is AIREEVEMALLALGYSLQEIQAALQALPSQPRPTEEWLRDAITYLSRQP.

The protein belongs to the RuvA family. In terms of assembly, homotetramer. Forms an RuvA(8)-RuvB(12)-Holliday junction (HJ) complex. HJ DNA is sandwiched between 2 RuvA tetramers; dsDNA enters through RuvA and exits via RuvB. An RuvB hexamer assembles on each DNA strand where it exits the tetramer. Each RuvB hexamer is contacted by two RuvA subunits (via domain III) on 2 adjacent RuvB subunits; this complex drives branch migration. In the full resolvosome a probable DNA-RuvA(4)-RuvB(12)-RuvC(2) complex forms which resolves the HJ.

Its subcellular location is the cytoplasm. The RuvA-RuvB-RuvC complex processes Holliday junction (HJ) DNA during genetic recombination and DNA repair, while the RuvA-RuvB complex plays an important role in the rescue of blocked DNA replication forks via replication fork reversal (RFR). RuvA specifically binds to HJ cruciform DNA, conferring on it an open structure. The RuvB hexamer acts as an ATP-dependent pump, pulling dsDNA into and through the RuvAB complex. HJ branch migration allows RuvC to scan DNA until it finds its consensus sequence, where it cleaves and resolves the cruciform DNA. The sequence is that of Holliday junction branch migration complex subunit RuvA from Synechococcus sp. (strain JA-3-3Ab) (Cyanobacteria bacterium Yellowstone A-Prime).